We begin with the raw amino-acid sequence, 806 residues long: Polyribonucleotide nucleotidyltransferase (806 aa).

D488 and D494 together coordinate Mg(2+). Residues 555 to 614 (PQIRTVQIPTDKIRDLIGPGGKTIRGIIEATQVKIDVDDTGRVNIASSDEEGLKKALAMI) form the KH domain. One can recognise an S1 motif domain in the interval 624–691 (GKTYLGKVVR…EGNRIKLSRK (68 aa)). Positions 698 to 806 (RQKLGLPEPG…QGGGGNRGPQ (109 aa)) are disordered. Over residues 704–717 (PEPGAEAPAAAEGQ) the composition is skewed to low complexity. Residues 738-757 (GGEDFDDFDEEGGEGEGEDE) are compositionally biased toward acidic residues. Positions 758–774 (NFNREDTPNSAPGERRP) are enriched in basic and acidic residues. Residues 783–792 (RGRRRRRGRG) are compositionally biased toward basic residues. The span at 793-806 (RGPGQGGGGNRGPQ) shows a compositional bias: gly residues.

Belongs to the polyribonucleotide nucleotidyltransferase family. Mg(2+) is required as a cofactor.

It is found in the cytoplasm. It carries out the reaction RNA(n+1) + phosphate = RNA(n) + a ribonucleoside 5'-diphosphate. Involved in mRNA degradation. Catalyzes the phosphorolysis of single-stranded polyribonucleotides processively in the 3'- to 5'-direction. The protein is Polyribonucleotide nucleotidyltransferase of Acidobacterium capsulatum (strain ATCC 51196 / DSM 11244 / BCRC 80197 / JCM 7670 / NBRC 15755 / NCIMB 13165 / 161).